A 780-amino-acid polypeptide reads, in one-letter code: Kojibiose phosphorylase (780 aa).

354-355 is a binding site for substrate; that stretch reads WD. The active-site Proton donor is the Glu496. Position 608 to 609 (608 to 609) interacts with substrate; the sequence is KQ.

Belongs to the glycosyl hydrolase 65 family.

It catalyses the reaction kojibiose + phosphate = beta-D-glucose 1-phosphate + D-glucose. Its function is as follows. Catalyzes the reversible phosphorolysis of kojibiose into beta-D-glucose 1-phosphate (Glc1P) and D-glucose. In the reverse direction, uses Glc1P as acceptor to produce alpha-1,2-glucans up to a degree of polymerization of 6. This is Kojibiose phosphorylase from Halothermothrix orenii (strain H 168 / OCM 544 / DSM 9562).